Reading from the N-terminus, the 78-residue chain is DNA-directed RNA polymerase subunit omega (78 aa).

This sequence belongs to the RNA polymerase subunit omega family. In terms of assembly, in cyanobacteria the RNAP catalytic core is composed of 2 alpha, 1 beta, 1 beta', 1 gamma and 1 omega subunit. When a sigma factor is associated with the core the holoenzyme is formed, which can initiate transcription.

It catalyses the reaction RNA(n) + a ribonucleoside 5'-triphosphate = RNA(n+1) + diphosphate. Promotes RNA polymerase assembly. Latches the N- and C-terminal regions of the beta' subunit thereby facilitating its interaction with the beta and alpha subunits. The polypeptide is DNA-directed RNA polymerase subunit omega (Nostoc punctiforme (strain ATCC 29133 / PCC 73102)).